The primary structure comprises 256 residues: Trans-aconitate 2-methyltransferase (256 aa).

Belongs to the methyltransferase superfamily. Tam family.

The protein resides in the cytoplasm. The enzyme catalyses trans-aconitate + S-adenosyl-L-methionine = (E)-3-(methoxycarbonyl)pent-2-enedioate + S-adenosyl-L-homocysteine. In terms of biological role, catalyzes the S-adenosylmethionine monomethyl esterification of trans-aconitate. This chain is Trans-aconitate 2-methyltransferase, found in Rhodopseudomonas palustris (strain BisB5).